The following is a 328-amino-acid chain: Malate dehydrogenase (328 aa).

Residue Gly-11 to Gly-17 participates in NAD(+) binding. Substrate contacts are provided by Arg-94 and Arg-100. NAD(+) is bound by residues Asn-107, Gln-114, and Val-131–Asn-133. Residues Asn-133 and Arg-164 each contribute to the substrate site. Catalysis depends on His-189, which acts as the Proton acceptor.

This sequence belongs to the LDH/MDH superfamily. MDH type 2 family.

It carries out the reaction (S)-malate + NAD(+) = oxaloacetate + NADH + H(+). Functionally, catalyzes the reversible oxidation of malate to oxaloacetate. In Stenotrophomonas maltophilia (strain R551-3), this protein is Malate dehydrogenase.